The chain runs to 480 residues: Probable cyclodipeptide synthase PUL1 (480 aa).

Its pathway is siderophore biosynthesis. Probable cyclodipeptide synthase; part of the PUL gene cluster that mediates the formation of pulcherrimin, a red iron-containing pigment composed of two cyclized and modified leucine molecules that acts as a siderophore, a chelator that binds iron outside the cell for subsequent uptake. Two leucine molecules are cyclized via a cyclodipeptide synthase, and the resulting diketopiperazine is oxidized by a cytochrome P450 monooxygenase to generate pulcherriminic acid (PA), which can then spontaneously bind iron to form pulcherrimin. The probable cyclodipeptide synthase PUL1 and the cytochrome P450 monooxygenase PUL2 encode the enzymes responsible for the two-step pulcherrimin biosynthesis pathway. This Kluyveromyces lactis (strain ATCC 8585 / CBS 2359 / DSM 70799 / NBRC 1267 / NRRL Y-1140 / WM37) (Yeast) protein is Probable cyclodipeptide synthase PUL1.